We begin with the raw amino-acid sequence, 255 residues long: Glycine-rich protein DOT1 (255 aa).

Positions 1–21 (MANHKNLFFLCFLIGLGLCSA) are cleaved as a signal peptide. The segment at 63-88 (GGGSGEGGGAGGHGEGHIGGGGGGGH) is disordered.

In terms of tissue distribution, expressed in emerging leaf primordia and young leaves.

Its subcellular location is the secreted. Involved in leaf vasculature patterning. This Arabidopsis thaliana (Mouse-ear cress) protein is Glycine-rich protein DOT1.